The sequence spans 148 residues: 3-hydroxyacyl-[acyl-carrier-protein] dehydratase FabZ (148 aa).

Residue H47 is part of the active site.

This sequence belongs to the thioester dehydratase family. FabZ subfamily.

It is found in the cytoplasm. It carries out the reaction a (3R)-hydroxyacyl-[ACP] = a (2E)-enoyl-[ACP] + H2O. In terms of biological role, involved in unsaturated fatty acids biosynthesis. Catalyzes the dehydration of short chain beta-hydroxyacyl-ACPs and long chain saturated and unsaturated beta-hydroxyacyl-ACPs. This Hydrogenobaculum sp. (strain Y04AAS1) protein is 3-hydroxyacyl-[acyl-carrier-protein] dehydratase FabZ.